Here is a 778-residue protein sequence, read N- to C-terminus: Hyperosmolality-gated Ca2+ permeable channel 1.4 (778 aa).

Transmembrane regions (helical) follow at residues 7–27, 101–121, 158–178, 375–395, 427–447, 467–487, 512–532, 584–604, 626–646, and 651–671; these read IGLAAAINILSALIFLLLFAI, IYLIGLKIFGPIALLSWSILV, FWAHLVMAYAFTFWTCYVLMK, FVMHIAFFFLTFFFIIPIAFV, FLPGIVLKLFLIFLPTILMIM, YYIFNLVNVFLGSVITGSAFE, ATFFITYIMVDGWAGVAGEIF, PVTPVLLPFIIFFFGFAYLVF, VHGRIISALIISQILLLGLMS, and VQSTPFLLVLAILTFGFHRFC. Positions 738 to 778 are disordered; the sequence is VVQTKRQRSRRTTVASSNASRGSSQSTPFNQLDLGKGKPET. A compositionally biased stretch (low complexity) spans 753 to 763; that stretch reads SSNASRGSSQS.

It belongs to the CSC1 (TC 1.A.17) family.

It is found in the membrane. Its function is as follows. Acts as an osmosensitive calcium-permeable cation channel. This is Hyperosmolality-gated Ca2+ permeable channel 1.4 from Arabidopsis thaliana (Mouse-ear cress).